Consider the following 400-residue polypeptide: Canavanine gamma-lyase (400 aa).

K213 carries the N6-(pyridoxal phosphate)lysine modification.

The protein belongs to the trans-sulfuration enzymes family. It depends on pyridoxal 5'-phosphate as a cofactor.

The catalysed reaction is L-canavanine + H2O = N-hydroxyguanidine + L-homoserine. In terms of biological role, lyase involved in the degradation of canavanine, the delta-oxa-analog of arginine, allowing growth on canavanine as sole nitrogen and carbon source. Catalyzes the elimination of hydroxyguanidine from canavanine with a subsequent water addition to yield homoserine. Is highly specific for canavanine and cannot use methionine, cystathionine or arginine. The protein is Canavanine gamma-lyase of Pseudomonas canavaninivorans.